A 143-amino-acid chain; its full sequence is Small ribosomal subunit protein uS12 (143 aa).

Residues 1–19 (MGKPRGLRTARKHVNHRRD) are compositionally biased toward basic residues. The tract at residues 1 to 23 (MGKPRGLRTARKHVNHRRDQRWA) is disordered. P62 bears the 3-hydroxyproline mark.

The protein belongs to the universal ribosomal protein uS12 family. In terms of assembly, component of the 40S small ribosomal subunit. Post-translationally, hydroxylation at Pro-62 affects translation termination efficiency.

The protein localises to the cytoplasm. The protein resides in the cytosol. Its subcellular location is the rough endoplasmic reticulum. The sequence is that of Small ribosomal subunit protein uS12 (RpS23) from Drosophila melanogaster (Fruit fly).